Reading from the N-terminus, the 303-residue chain is Tyrosine recombinase XerC (303 aa).

The region spanning 6–92 is the Core-binding (CB) domain; that stretch reads ASLAPQVEAF…ALRSFLNWLV (87 aa). In terms of domain architecture, Tyr recombinase spans 113 to 292; the sequence is HLPKNIDVDE…DFQHLATVYD (180 aa). Residues arginine 152, lysine 176, histidine 244, arginine 247, and histidine 270 contribute to the active site. The active-site O-(3'-phospho-DNA)-tyrosine intermediate is tyrosine 279.

This sequence belongs to the 'phage' integrase family. XerC subfamily. Forms a cyclic heterotetrameric complex composed of two molecules of XerC and two molecules of XerD, in which XerC interacts with XerD via its C-terminal region, XerD interacts with XerC via its C-terminal region and so on.

It localises to the cytoplasm. With respect to regulation, ftsK may regulate the catalytic switch between XerC and XerD in the heterotetrameric complex during the two steps of the recombination process. Its function is as follows. Site-specific tyrosine recombinase, which acts by catalyzing the cutting and rejoining of the recombining DNA molecules. Binds cooperatively to specific DNA consensus sequences that are separated from XerD binding sites by a short central region, forming the heterotetrameric XerC-XerD complex that recombines DNA substrates. The complex is essential to convert dimers of the bacterial chromosome into monomers to permit their segregation at cell division. It also contributes to the segregational stability of plasmids. In the complex XerC specifically exchanges the top DNA strands. The chain is Tyrosine recombinase XerC from Yersinia pestis.